The following is a 192-amino-acid chain: MEALRQKVKEDGVVIGEKILKVDGFLNHQIDAQLMYDIGETFYEQFKDQKVTKILTVEASGIAPAIMVAYKFGVPCLFAKKAKPNTLNKGFYQTDIHSFTKDKTNSVIISEEFLDEHDRVLIIDDFLANGDASLGLNRLVHQAGAETVGVGIVVEKSFQQGRTRLEEAGLKVSSLCEVASLSGNKVTLVGEE.

Residues Leu20 and Asn27 each coordinate xanthine. Residue 128–132 participates in 5-phospho-alpha-D-ribose 1-diphosphate binding; it reads ANGDA. Lys156 contributes to the xanthine binding site.

It belongs to the purine/pyrimidine phosphoribosyltransferase family. Xpt subfamily. As to quaternary structure, homodimer.

The protein localises to the cytoplasm. The enzyme catalyses XMP + diphosphate = xanthine + 5-phospho-alpha-D-ribose 1-diphosphate. It participates in purine metabolism; XMP biosynthesis via salvage pathway; XMP from xanthine: step 1/1. Its function is as follows. Converts the preformed base xanthine, a product of nucleic acid breakdown, to xanthosine 5'-monophosphate (XMP), so it can be reused for RNA or DNA synthesis. The polypeptide is Xanthine phosphoribosyltransferase (Staphylococcus carnosus (strain TM300)).